The sequence spans 583 residues: Aspartate--tRNA ligase (583 aa).

Residue glutamate 174 coordinates L-aspartate. Positions 198 to 201 are aspartate; sequence QITK. Arginine 220 serves as a coordination point for L-aspartate. ATP-binding positions include 220 to 222 and glutamine 229; that span reads RDE. Residue histidine 443 participates in L-aspartate binding. Residue glutamate 477 participates in ATP binding. Arginine 484 is an L-aspartate binding site. 529 to 532 contributes to the ATP binding site; it reads GLDR.

Belongs to the class-II aminoacyl-tRNA synthetase family. Type 1 subfamily. Homodimer.

The protein resides in the cytoplasm. It carries out the reaction tRNA(Asp) + L-aspartate + ATP = L-aspartyl-tRNA(Asp) + AMP + diphosphate. Functionally, catalyzes the attachment of L-aspartate to tRNA(Asp) in a two-step reaction: L-aspartate is first activated by ATP to form Asp-AMP and then transferred to the acceptor end of tRNA(Asp). This chain is Aspartate--tRNA ligase, found in Streptococcus thermophilus (strain CNRZ 1066).